A 287-amino-acid polypeptide reads, in one-letter code: L-ascorbate peroxidase 3 (287 aa).

A2 carries the N-acetylalanine modification. Residue H40 is the Proton acceptor of the active site. The segment at 46–66 is disordered; sequence DAQSKTGGPNGSIRNEEEHTH. Residue H160 participates in heme b binding. The K(+) site is built by T161, T177, and D184. A helical membrane pass occupies residues 259–279; it reads ILAQSAFGVAVAAAVVAFGYF. Positions 281-287 match the AKR2A-binding sequence (ABS) required for peroxisome membrane targeting motif; that stretch reads EIRKRMK.

This sequence belongs to the peroxidase family. Ascorbate peroxidase subfamily. Interacts via its C-terminal region with AKR2A and AKR2B. Heme b is required as a cofactor.

The protein resides in the peroxisome membrane. It localises to the glyoxysome membrane. The catalysed reaction is L-ascorbate + H2O2 = L-dehydroascorbate + 2 H2O. Functionally, plays a key role in hydrogen peroxide removal. This Arabidopsis thaliana (Mouse-ear cress) protein is L-ascorbate peroxidase 3 (APX3).